A 535-amino-acid polypeptide reads, in one-letter code: Sucrose transport protein SUT5 (535 aa).

Residues 1-53 (MEEGRRGDREAKSAAGWTALSTTKTTLEEKRRLQANGSVGGDAGTSGFRRIVR) are Cytoplasmic-facing. Residues 54–74 (LFFACMVAGGIQYGWALQLSL) traverse the membrane as a helical segment. At 75–87 (LSPYSQTLGISHS) the chain is on the extracellular side. Residues 88–108 (YVSLTWICGPIAGFVVQPIVG) traverse the membrane as a helical segment. Over 109-122 (YYSDRCTMKMGRRR) the chain is Cytoplasmic. A helical membrane pass occupies residues 123–143 (PFILVGCLIICISVMIIGFSA). Topologically, residues 144–163 (DIGRHLGDTKEHCSTYTGPR) are extracellular. Residues 164 to 184 (WSAAMVYIVGFWFLDFANNTV) form a helical membrane-spanning segment. The Cytoplasmic segment spans residues 185 to 203 (QGPARAMMADLSAGHHGPN). Residues 204–224 (VGQSIFSLWMAIGSVLGYLSG) traverse the membrane as a helical segment. Over 225 to 249 (ANGKWHEWFPWLKTAACCDACANLK) the chain is Extracellular. Residues 250–270 (GAFFTAVLLIVVSMTVTMYLA) traverse the membrane as a helical segment. At 271–302 (DEMPLDKQDVDTSGGGGCAVFVDLFKSLRNLP) the chain is on the cytoplasmic side. The helical transmembrane segment at 303–323 (PAMFKVLAVTAVTWLSWFPFI) threads the bilayer. Over 324-354 (QYNTDWMGREIYHGEPQGTAAKADVYDAGVR) the chain is Extracellular. The helical transmembrane segment at 355-375 (EGAMGLLFCSVALGVTSFVIP) threads the bilayer. The Cytoplasmic segment spans residues 376 to 384 (KLCRRLTSK). Residues 385-405 (VVWSISNFLVFALMAVMVAVG) traverse the membrane as a helical segment. Residues 406–429 (MVSMRGYRPSLAAGLTGPDPTLKA) are Extracellular-facing. Residues 430–450 (VALVVFALIGIPQAVLFSVPW) traverse the membrane as a helical segment. The Cytoplasmic portion of the chain corresponds to 451 to 465 (AVASEVTAEEGGGQG). A helical transmembrane segment spans residues 466-486 (LAIGVLNIAIVVPQLVIALTA). The Extracellular segment spans residues 487–498 (GPIDGAFNKGNT). A helical membrane pass occupies residues 499-519 (PAFGIGGAFAFICGVLALIWL). The Cytoplasmic portion of the chain corresponds to 520-535 (PKTRGVSNAAVVAGGH).

Belongs to the glycoside-pentoside-hexuronide (GPH) cation symporter transporter (TC 2.A.2.4) family. In terms of assembly, homodimer.

It localises to the cell membrane. The protein operates within glycan biosynthesis; sucrose metabolism. Responsible for the transport of sucrose into the cell, with the concomitant uptake of protons (symport system). May also transport other glucosides. This is Sucrose transport protein SUT5 (SUT5) from Oryza sativa subsp. indica (Rice).